Here is a 348-residue protein sequence, read N- to C-terminus: Tetraacyldisaccharide 4'-kinase (348 aa).

50 to 57 (TMGGTGKT) is a binding site for ATP.

The protein belongs to the LpxK family.

The catalysed reaction is a lipid A disaccharide + ATP = a lipid IVA + ADP + H(+). It participates in glycolipid biosynthesis; lipid IV(A) biosynthesis; lipid IV(A) from (3R)-3-hydroxytetradecanoyl-[acyl-carrier-protein] and UDP-N-acetyl-alpha-D-glucosamine: step 6/6. Functionally, transfers the gamma-phosphate of ATP to the 4'-position of a tetraacyldisaccharide 1-phosphate intermediate (termed DS-1-P) to form tetraacyldisaccharide 1,4'-bis-phosphate (lipid IVA). The protein is Tetraacyldisaccharide 4'-kinase of Desulfotalea psychrophila (strain LSv54 / DSM 12343).